We begin with the raw amino-acid sequence, 307 residues long: Protein EI24 homolog (307 aa).

2 consecutive transmembrane segments (helical) span residues 53 to 73 (FIHCIFLNGIIFLGTYLIYLY) and 92 to 112 (MFTIIYFSLWVYPVYIFSIIA). N135 carries N-linked (GlcNAc...) asparagine glycosylation. Helical transmembrane passes span 153–173 (LFGVILVMSAIIAFIPYTNFI), 175–195 (FVIITWLYSFWCFDYKWILRG), 225–245 (FFFPMLIGNAIFSILYPLFII), and 260–280 (GILPKQIPIFYVPEIIVNVIL).

The protein belongs to the EI24 family.

The protein localises to the membrane. The sequence is that of Protein EI24 homolog from Dictyostelium discoideum (Social amoeba).